The following is a 274-amino-acid chain: Large ribosomal subunit protein uL2 (274 aa).

Residues 224-274 form a disordered region; sequence VAMNPVDHPHGGGEGRTSGGRHPVTPWGIPTKGYKTRKNKRSNKLIVQKRK. Basic residues predominate over residues 257 to 274; sequence YKTRKNKRSNKLIVQKRK.

Belongs to the universal ribosomal protein uL2 family. In terms of assembly, part of the 50S ribosomal subunit. Forms a bridge to the 30S subunit in the 70S ribosome.

One of the primary rRNA binding proteins. Required for association of the 30S and 50S subunits to form the 70S ribosome, for tRNA binding and peptide bond formation. It has been suggested to have peptidyltransferase activity; this is somewhat controversial. Makes several contacts with the 16S rRNA in the 70S ribosome. The chain is Large ribosomal subunit protein uL2 from Francisella philomiragia subsp. philomiragia (strain ATCC 25017 / CCUG 19701 / FSC 153 / O#319-036).